Here is a 250-residue protein sequence, read N- to C-terminus: Small ribosomal subunit protein uS2 (250 aa).

It belongs to the universal ribosomal protein uS2 family.

The protein is Small ribosomal subunit protein uS2 of Acidovorax sp. (strain JS42).